The following is a 119-amino-acid chain: Large ribosomal subunit protein bL20 (119 aa).

The protein belongs to the bacterial ribosomal protein bL20 family.

Functionally, binds directly to 23S ribosomal RNA and is necessary for the in vitro assembly process of the 50S ribosomal subunit. It is not involved in the protein synthesizing functions of that subunit. The protein is Large ribosomal subunit protein bL20 of Streptococcus agalactiae serotype Ia (strain ATCC 27591 / A909 / CDC SS700).